We begin with the raw amino-acid sequence, 941 residues long: Myosin heavy chain kinase D (941 aa).

Residues 8–48 (KLSKKIEKILEKNDYLKKKVEQLTKSVDNHEFKIQELLLLL) adopt a coiled-coil conformation. Composition is skewed to low complexity over residues 57 to 70 (TTTT…NNST), 84 to 115 (TSTD…TTTS), and 124 to 206 (NSNN…PQLS). Disordered stretches follow at residues 57–234 (TTTT…KEDS) and 276–310 (SSNN…QQQQ). Positions 289–317 (SILNDQQNQQQNQQQQNQQQQQEEINFIT) form a coiled coil. In terms of domain architecture, Alpha-type protein kinase spans 337–582 (EYSANDDEWT…ICLQFGLPPI (246 aa)). WD repeat units lie at residues 635–674 (GHDE…DLSK), 683–720 (AHRR…TTTT), 741–780 (DHTA…CIKS), 783–820 (AHGK…CVYG), 824–861 (AHDA…PTTT), 864–902 (QHNM…EPIK), and 909–941 (AHRS…WKNK).

This sequence belongs to the protein kinase superfamily. Alpha-type protein kinase family. ALPK subfamily.

It catalyses the reaction L-threonyl-[myosin heavy-chain] + ATP = O-phospho-L-threonyl-[myosin heavy-chain] + ADP + H(+). Its function is as follows. Phosphorylates threonine. Not critical for regulating the assembly and disassembly of myosin II filament. The protein is Myosin heavy chain kinase D (mhkD) of Dictyostelium discoideum (Social amoeba).